A 572-amino-acid chain; its full sequence is Formate--tetrahydrofolate ligase (572 aa).

Residue 81–88 coordinates ATP; the sequence is TPAGEGKT.

It belongs to the formate--tetrahydrofolate ligase family.

It catalyses the reaction (6S)-5,6,7,8-tetrahydrofolate + formate + ATP = (6R)-10-formyltetrahydrofolate + ADP + phosphate. It participates in one-carbon metabolism; tetrahydrofolate interconversion. In Granulibacter bethesdensis (strain ATCC BAA-1260 / CGDNIH1), this protein is Formate--tetrahydrofolate ligase.